The chain runs to 343 residues: Biotin synthase (343 aa).

One can recognise a Radical SAM core domain in the interval 36-254 (NTIQISTLLS…IAVARIMMPK (219 aa)). The [4Fe-4S] cluster site is built by Cys-51, Cys-55, and Cys-58. Residues Cys-95, Cys-126, Cys-186, and Arg-258 each coordinate [2Fe-2S] cluster.

Belongs to the radical SAM superfamily. Biotin synthase family. In terms of assembly, homodimer. It depends on [4Fe-4S] cluster as a cofactor. Requires [2Fe-2S] cluster as cofactor.

The catalysed reaction is (4R,5S)-dethiobiotin + (sulfur carrier)-SH + 2 reduced [2Fe-2S]-[ferredoxin] + 2 S-adenosyl-L-methionine = (sulfur carrier)-H + biotin + 2 5'-deoxyadenosine + 2 L-methionine + 2 oxidized [2Fe-2S]-[ferredoxin]. It functions in the pathway cofactor biosynthesis; biotin biosynthesis; biotin from 7,8-diaminononanoate: step 2/2. Functionally, catalyzes the conversion of dethiobiotin (DTB) to biotin by the insertion of a sulfur atom into dethiobiotin via a radical-based mechanism. The sequence is that of Biotin synthase from Buchnera aphidicola subsp. Acyrthosiphon pisum (strain 5A).